The following is a 279-amino-acid chain: PHO85 cyclin-1 (279 aa).

Positions 19 to 152 (DIIKFLTDTT…LLQLLNWDLR (134 aa)) constitute a Cyclin N-terminal domain. Residues 29–36 (LRVVPSSN) form a required for degradation by DMA1 region. Thr-39 is modified (phosphothreonine; by PHO85). Ser-43 is subject to Phosphoserine; by PHO85. Glycyl lysine isopeptide (Lys-Gly) (interchain with G-Cter in ubiquitin) cross-links involve residues Lys-82 and Lys-121.

The protein belongs to the cyclin family. PCL1,2 subfamily. As to quaternary structure, forms a cyclin-CDK complex with PHO85. Interacts with HMS1, NCP1 and NPA3. Interacts with DMA1. Phosphorylated by PHO85; necessary for interaction with DMA1 and subsequent degradation. Post-translationally, ubiquitinated by E3 ubiquitin ligase DMA1 in response to nutrient condition; this targets PCL1 for destruction.

The protein localises to the cytoplasm. It is found in the nucleus. In terms of biological role, G1/S-specific cyclin partner of the cyclin-dependent kinase (CDK) PHO85. Essential for the control of the cell cycle at the G1/S (start) transition. The PCL1-PHO85 cyclin-CDK holoenzyme is involved in phosphorylation of the CDK inhibitor (CKI) SIC1, which is required for its ubiquitination and degradation, releasing repression of b-type cyclins and promoting exit from mitosis. Together with cyclin PCL2, positively controls degradation of sphingoid long chain base kinase LCB4. PCL1-PHO85 phosphorylates LCB4, which is required for its ubiquitination and degradation. PCL1-PHO85 also phosphorylates HMS1, NCP1 and NPA3, which may all have a role in mitotic exit. This chain is PHO85 cyclin-1, found in Saccharomyces cerevisiae (strain ATCC 204508 / S288c) (Baker's yeast).